The chain runs to 486 residues: Ribulose bisphosphate carboxylase large chain (486 aa).

Asparagine 125 and threonine 175 together coordinate substrate. Lysine 177 acts as the Proton acceptor in catalysis. Lysine 179 contributes to the substrate binding site. Mg(2+)-binding residues include lysine 203, aspartate 205, and glutamate 206. The residue at position 203 (lysine 203) is an N6-carboxylysine. Histidine 295 functions as the Proton acceptor in the catalytic mechanism. Positions 296, 328, and 380 each coordinate substrate.

It belongs to the RuBisCO large chain family. Type I subfamily. Heterohexadecamer of 8 large chains and 8 small chains. Requires Mg(2+) as cofactor.

It catalyses the reaction 2 (2R)-3-phosphoglycerate + 2 H(+) = D-ribulose 1,5-bisphosphate + CO2 + H2O. The catalysed reaction is D-ribulose 1,5-bisphosphate + O2 = 2-phosphoglycolate + (2R)-3-phosphoglycerate + 2 H(+). Its function is as follows. RuBisCO catalyzes two reactions: the carboxylation of D-ribulose 1,5-bisphosphate, the primary event in carbon dioxide fixation, as well as the oxidative fragmentation of the pentose substrate. Both reactions occur simultaneously and in competition at the same active site. This is Ribulose bisphosphate carboxylase large chain from Bradyrhizobium diazoefficiens (strain JCM 10833 / BCRC 13528 / IAM 13628 / NBRC 14792 / USDA 110).